A 386-amino-acid polypeptide reads, in one-letter code: Lycopene beta-cyclase (386 aa).

3 to 33 (DLILVGGGLANGLIAWRLRQRYPQLNLLLIE) contacts NAD(+).

It belongs to the lycopene cyclase family. Requires FAD as cofactor.

It carries out the reaction a carotenoid psi-end group = a carotenoid beta-end derivative. The enzyme catalyses all-trans-lycopene = gamma-carotene. The catalysed reaction is gamma-carotene = all-trans-beta-carotene. Its pathway is carotenoid biosynthesis; beta-carotene biosynthesis. In terms of biological role, catalyzes the double cyclization reaction which converts lycopene to beta-carotene. The chain is Lycopene beta-cyclase from Pseudescherichia vulneris (Escherichia vulneris).